Here is a 343-residue protein sequence, read N- to C-terminus: F17b-G fimbrial adhesin (343 aa).

The N-terminal stretch at 1 to 22 (MTNFYKVFLAVFILVCCNISHA) is a signal peptide. Residues 23-199 (VVSFIGSTEN…LNPFTLNDTV (177 aa)) are receptor-binding lectin domain. Residues 65 to 66 (AN), 110 to 111 (DT), and 138 to 141 (STQG) contribute to the a carbohydrate site. A disulfide bridge links Cys-75 with Cys-132. Residues 200 to 343 (TSCRLLTPSA…GISTFTFSYQ (144 aa)) are fimbrillin-binding domain. The disordered stretch occupies residues 287–307 (LKFGPDSPVKGNENQWQLSTG). Residues 298 to 307 (NENQWQLSTG) are compositionally biased toward polar residues.

This sequence belongs to the fimbrial protein family.

The protein resides in the fimbrium. Its function is as follows. Essential fimbrial adhesion factor that mediates binding to N-acetylglucosamine-containing receptors in the host intestinal microvilli, leading to colonization of the intestinal tissue, and diarrhea or septicemia. Also confers adhesiveness to laminin and basement membranes. The chain is F17b-G fimbrial adhesin (f17bG) from Escherichia coli.